Consider the following 366-residue polypeptide: Chorismate synthase (366 aa).

Positions 48 and 54 each coordinate NADP(+). FMN is bound by residues 125–127 (RSS), 238–239 (NA), G278, 293–297 (KPTSS), and R319.

It belongs to the chorismate synthase family. As to quaternary structure, homotetramer. It depends on FMNH2 as a cofactor.

It carries out the reaction 5-O-(1-carboxyvinyl)-3-phosphoshikimate = chorismate + phosphate. It participates in metabolic intermediate biosynthesis; chorismate biosynthesis; chorismate from D-erythrose 4-phosphate and phosphoenolpyruvate: step 7/7. In terms of biological role, catalyzes the anti-1,4-elimination of the C-3 phosphate and the C-6 proR hydrogen from 5-enolpyruvylshikimate-3-phosphate (EPSP) to yield chorismate, which is the branch point compound that serves as the starting substrate for the three terminal pathways of aromatic amino acid biosynthesis. This reaction introduces a second double bond into the aromatic ring system. The protein is Chorismate synthase of Neisseria meningitidis serogroup B (strain ATCC BAA-335 / MC58).